The sequence spans 64 residues: Translation machinery-associated protein 7 (64 aa).

Disordered stretches follow at residues Met1–Ala38 and Ala45–Lys64. A compositionally biased stretch (basic and acidic residues) spans Ile27–Ala38. Over residues Leu53 to Lys64 the composition is skewed to gly residues.

It belongs to the TMA7 family. In terms of assembly, interacts with the 40S ribosomal subunit.

It localises to the cytoplasm. Its subcellular location is the nucleus. Its function is as follows. Involved in protein synthesis. This chain is Translation machinery-associated protein 7 (TMA7), found in Saccharomyces cerevisiae (strain ATCC 204508 / S288c) (Baker's yeast).